We begin with the raw amino-acid sequence, 690 residues long: Dual specificity protein kinase lkh1 (690 aa).

The tract at residues 39–70 is disordered; the sequence is PNLPPPFSVHQLQSFVPPQPPSSSSPSTTGTV. Residues 362–682 form the Protein kinase domain; sequence YTVVRLLGHG…AKEALWHPFF (321 aa). ATP is bound by residues 368 to 376 and Lys-391; that span reads LGHGTFGKV. Catalysis depends on Asp-488, which acts as the Proton acceptor.

This sequence belongs to the protein kinase superfamily. CMGC Ser/Thr protein kinase family. Lammer subfamily. Post-translationally, autophosphorylates on all three types of residues.

The enzyme catalyses L-seryl-[protein] + ATP = O-phospho-L-seryl-[protein] + ADP + H(+). The catalysed reaction is L-threonyl-[protein] + ATP = O-phospho-L-threonyl-[protein] + ADP + H(+). It catalyses the reaction L-tyrosyl-[protein] + ATP = O-phospho-L-tyrosyl-[protein] + ADP + H(+). Protein kinase that may act as a negative regulator of filamentous growth and flocculation. Appears to have a role in normal cell wall and septum formation and in cell separation. May have antagonistic function in the regulation of beta-glucan distribution between the sites for cell wall and septum assembly. In Schizosaccharomyces pombe (strain 972 / ATCC 24843) (Fission yeast), this protein is Dual specificity protein kinase lkh1 (lkh1).